The primary structure comprises 581 residues: Proline--tRNA ligase (581 aa).

Belongs to the class-II aminoacyl-tRNA synthetase family. ProS type 1 subfamily. In terms of assembly, homodimer.

It is found in the cytoplasm. It carries out the reaction tRNA(Pro) + L-proline + ATP = L-prolyl-tRNA(Pro) + AMP + diphosphate. Functionally, catalyzes the attachment of proline to tRNA(Pro) in a two-step reaction: proline is first activated by ATP to form Pro-AMP and then transferred to the acceptor end of tRNA(Pro). As ProRS can inadvertently accommodate and process non-cognate amino acids such as alanine and cysteine, to avoid such errors it has two additional distinct editing activities against alanine. One activity is designated as 'pretransfer' editing and involves the tRNA(Pro)-independent hydrolysis of activated Ala-AMP. The other activity is designated 'posttransfer' editing and involves deacylation of mischarged Ala-tRNA(Pro). The misacylated Cys-tRNA(Pro) is not edited by ProRS. This Rhodococcus erythropolis (strain PR4 / NBRC 100887) protein is Proline--tRNA ligase.